The sequence spans 259 residues: Putative protein-tyrosine sulfotransferase (259 aa).

A disulfide bridge links C13 with C68. E16 (proton donor/acceptor) is an active-site residue. N36 is a glycosylation site (N-linked (GlcNAc...) asparagine). 3'-phosphoadenylyl sulfate contacts are provided by R95, S103, and R107. N115 carries N-linked (GlcNAc...) asparagine glycosylation. C137 and C144 are disulfide-bonded. 3'-phosphoadenylyl sulfate-binding positions include Y149 and 194-203; that span reads SASQVKNSIN.

This sequence belongs to the protein sulfotransferase family.

It carries out the reaction L-tyrosyl-[protein] + 3'-phosphoadenylyl sulfate = O-sulfo-L-tyrosine-[protein] + adenosine 3',5'-bisphosphate + H(+). Its function is as follows. Catalyzes the O-sulfation of tyrosine residues within acidic motifs of polypeptides, using 3'-phosphoadenylyl sulfate (PAPS) as cosubstrate. The chain is Putative protein-tyrosine sulfotransferase (tpst-2) from Caenorhabditis elegans.